We begin with the raw amino-acid sequence, 88 residues long: EMBRYO SURROUNDING FACTOR 1-like protein 7 (88 aa).

A signal peptide spans 1–22 (MKSSHIALICIVMFSLFALHES). Cystine bridges form between Cys-41–Cys-57, Cys-46–Cys-85, Cys-55–Cys-81, and Cys-58–Cys-68.

This sequence belongs to the MEG family. As to expression, expressed in leaves and flowers.

This chain is EMBRYO SURROUNDING FACTOR 1-like protein 7 (ESFL7), found in Arabidopsis thaliana (Mouse-ear cress).